We begin with the raw amino-acid sequence, 353 residues long: Photosystem II protein D1 (353 aa).

Position 2 is an N-acetylthreonine (Thr-2). Residue Thr-2 is modified to Phosphothreonine. The next 3 membrane-spanning stretches (helical) occupy residues 29–46, 118–133, and 142–156; these read YIGWFGVLMIPTLLTATS, HFLLGVACYMGREWEL, and WIAVAYSAPVAAATA. His-118 contributes to the chlorophyll a binding site. Tyr-126 serves as a coordination point for pheophytin a. Residues Asp-170 and Glu-189 each contribute to the [CaMn4O5] cluster site. Residues 197–218 traverse the membrane as a helical segment; that stretch reads FHMLGVAGVFGGSLFSAMHGSL. Residue His-198 coordinates chlorophyll a. A quinone-binding positions include His-215 and 264-265; that span reads SF. His-215 is a Fe cation binding site. His-272 contributes to the Fe cation binding site. The chain crosses the membrane as a helical span at residues 274 to 288; the sequence is FLAAWPVVGIWFTAL. Positions 332, 333, 342, and 344 each coordinate [CaMn4O5] cluster. The propeptide occupies 345-353; the sequence is ALEVPSING.

This sequence belongs to the reaction center PufL/M/PsbA/D family. In terms of assembly, PSII is composed of 1 copy each of membrane proteins PsbA, PsbB, PsbC, PsbD, PsbE, PsbF, PsbH, PsbI, PsbJ, PsbK, PsbL, PsbM, PsbT, PsbX, PsbY, PsbZ, Psb30/Ycf12, at least 3 peripheral proteins of the oxygen-evolving complex and a large number of cofactors. It forms dimeric complexes. The cofactor is The D1/D2 heterodimer binds P680, chlorophylls that are the primary electron donor of PSII, and subsequent electron acceptors. It shares a non-heme iron and each subunit binds pheophytin, quinone, additional chlorophylls, carotenoids and lipids. D1 provides most of the ligands for the Mn4-Ca-O5 cluster of the oxygen-evolving complex (OEC). There is also a Cl(-1) ion associated with D1 and D2, which is required for oxygen evolution. The PSII complex binds additional chlorophylls, carotenoids and specific lipids.. Post-translationally, tyr-161 forms a radical intermediate that is referred to as redox-active TyrZ, YZ or Y-Z. In terms of processing, C-terminally processed by CTPA; processing is essential to allow assembly of the oxygen-evolving complex and thus photosynthetic growth.

It is found in the plastid. It localises to the chloroplast thylakoid membrane. It carries out the reaction 2 a plastoquinone + 4 hnu + 2 H2O = 2 a plastoquinol + O2. Its function is as follows. Photosystem II (PSII) is a light-driven water:plastoquinone oxidoreductase that uses light energy to abstract electrons from H(2)O, generating O(2) and a proton gradient subsequently used for ATP formation. It consists of a core antenna complex that captures photons, and an electron transfer chain that converts photonic excitation into a charge separation. The D1/D2 (PsbA/PsbD) reaction center heterodimer binds P680, the primary electron donor of PSII as well as several subsequent electron acceptors. The chain is Photosystem II protein D1 from Agrostis stolonifera (Creeping bentgrass).